A 240-amino-acid polypeptide reads, in one-letter code: UDP-2,3-diacylglucosamine hydrolase (240 aa).

Positions 8, 10, 41, 79, and 114 each coordinate Mn(2+). 79 to 80 lines the substrate pocket; the sequence is NR. The substrate site is built by Asp-122, Ser-160, Asn-164, Lys-167, and His-195. Residues His-195 and His-197 each coordinate Mn(2+).

Belongs to the LpxH family. It depends on Mn(2+) as a cofactor.

The protein localises to the cell inner membrane. The catalysed reaction is UDP-2-N,3-O-bis[(3R)-3-hydroxytetradecanoyl]-alpha-D-glucosamine + H2O = 2-N,3-O-bis[(3R)-3-hydroxytetradecanoyl]-alpha-D-glucosaminyl 1-phosphate + UMP + 2 H(+). It participates in glycolipid biosynthesis; lipid IV(A) biosynthesis; lipid IV(A) from (3R)-3-hydroxytetradecanoyl-[acyl-carrier-protein] and UDP-N-acetyl-alpha-D-glucosamine: step 4/6. Its function is as follows. Hydrolyzes the pyrophosphate bond of UDP-2,3-diacylglucosamine to yield 2,3-diacylglucosamine 1-phosphate (lipid X) and UMP by catalyzing the attack of water at the alpha-P atom. Involved in the biosynthesis of lipid A, a phosphorylated glycolipid that anchors the lipopolysaccharide to the outer membrane of the cell. In Salmonella paratyphi C (strain RKS4594), this protein is UDP-2,3-diacylglucosamine hydrolase.